A 60-amino-acid chain; its full sequence is Cytotoxin 6 (60 aa).

4 cysteine pairs are disulfide-bonded: C3–C21, C14–C38, C42–C53, and C54–C59.

Belongs to the three-finger toxin family. Short-chain subfamily. Type IA cytotoxin sub-subfamily. In terms of assembly, monomer in solution; Homodimer and oligomer in the presence of negatively charged lipids forming a pore with a size ranging between 20 and 30 Angstroms. As to expression, expressed by the venom gland.

It is found in the secreted. Its subcellular location is the target cell membrane. Its function is as follows. Shows cytolytic activity on many different cells by forming pore in lipid membranes. In vivo, increases heart rate or kills the animal by cardiac arrest. In addition, it binds to heparin with high affinity, interacts with Kv channel-interacting protein 1 (KCNIP1) in a calcium-independent manner, and binds to integrin alpha-V/beta-3 (ITGAV/ITGB3) with moderate affinity. The chain is Cytotoxin 6 from Naja annulifera (Banded Egyptian cobra).